A 378-amino-acid chain; its full sequence is 1-acyl-sn-glycerol-3-phosphate acyltransferase delta (378 aa).

The helical transmembrane segment at 11–31 (FLCHLVFCYVFIASGLIVNAI) threads the bilayer. An HXXXXD motif motif is present at residues 96–101 (HKFEID). The next 3 membrane-spanning stretches (helical) occupy residues 125 to 145 (ELAY…IFCT), 311 to 331 (WLFW…SMVS), and 338 to 358 (LASL…MIGV).

It belongs to the 1-acyl-sn-glycerol-3-phosphate acyltransferase family. Expressed at a high levels in the brain, at intermediate or low levels in skeletal muscles, gut, kidney, spleen and lung. Barely detectable in heart and liver.

It localises to the endoplasmic reticulum membrane. The enzyme catalyses a 1-acyl-sn-glycero-3-phosphate + an acyl-CoA = a 1,2-diacyl-sn-glycero-3-phosphate + CoA. It catalyses the reaction (4Z,7Z,10Z,13Z,16Z,19Z)-docosahexaenoyl-CoA + 1-hexadecanoyl-sn-glycero-3-phosphate = 1-hexadecanoyl-2-(4Z,7Z,10Z,13Z,16Z,19Z-docosahexaenoyl)-sn-glycero-3-phosphate + CoA. The catalysed reaction is 1-octadecanoyl-sn-glycero-3-phosphate + (9Z,12Z)-octadecadienoyl-CoA = 1-octadecanoyl-2-(9Z,12Z-octadecadienoyl)-sn-glycero-3-phosphate + CoA. It carries out the reaction 1-octadecanoyl-sn-glycero-3-phosphate + (4Z,7Z,10Z,13Z,16Z,19Z)-docosahexaenoyl-CoA = 1-octadecanoyl-2-(4Z,7Z,10Z,13Z,16Z,19Z-docosahexaenoyl)-sn-glycero-3-phosphate + CoA. The enzyme catalyses (4Z,7Z,10Z,13Z,16Z,19Z)-docosahexaenoyl-CoA + 1-(9Z-octadecenoyl)-sn-glycero-3-phosphate = 1-(9Z-octadecenoyl)-2-(4Z,7Z,10Z,13Z,16Z,19Z-docosahexaenoyl)-sn-glycero-3-phosphate + CoA. The protein operates within phospholipid metabolism; CDP-diacylglycerol biosynthesis; CDP-diacylglycerol from sn-glycerol 3-phosphate: step 2/3. In terms of biological role, converts 1-acyl-sn-glycerol-3-phosphate (lysophosphatidic acid or LPA) into 1,2-diacyl-sn-glycerol-3-phosphate (phosphatidic acid or PA) by incorporating an acyl moiety at the sn-2 position of the glycerol backbone. Exhibits high acyl-CoA specificity for polyunsaturated fatty acyl-CoA, especially docosahexaenoyl-CoA (22:6-CoA, DHA-CoA). This chain is 1-acyl-sn-glycerol-3-phosphate acyltransferase delta (Agpat4), found in Mus musculus (Mouse).